The sequence spans 297 residues: HTH-type transcriptional regulator PerR (297 aa).

In terms of domain architecture, HTH lysR-type spans 7–64 (APLNLLRAFEAAGRTGAFALAASELELSPSAISHAIRKLENLLDVRLFQRSTREITLT). The H-T-H motif DNA-binding region spans 24 to 44 (FALAASELELSPSAISHAIRK).

This sequence belongs to the LysR transcriptional regulatory family.

Functionally, apparent regulatory gene involved in peroxide resistance in stationary phase. The sequence is that of HTH-type transcriptional regulator PerR (perR) from Escherichia coli (strain K12).